Consider the following 119-residue polypeptide: Protein yippee-like 1 (119 aa).

The Yippee domain maps to 19–116 (RTYSCIHCRA…IELAHMIKDN (98 aa)). 4 residues coordinate Zn(2+): Cys-23, Cys-26, Cys-79, and Cys-82. The Nuclear localization signal signature appears at 99–104 (KYKEGK).

It belongs to the yippee family.

The protein localises to the nucleus. Its function is as follows. May play a role in epithelioid conversion of fibroblasts. This Chlorocebus aethiops (Green monkey) protein is Protein yippee-like 1 (YPEL1).